Here is a 422-residue protein sequence, read N- to C-terminus: Hexuronate transporter (422 aa).

11 helical membrane passes run 9 to 29, 45 to 65, 82 to 102, 141 to 161, 163 to 183, 219 to 239, 256 to 276, 294 to 314, 321 to 341, 356 to 376, and 381 to 401; these read VILF…ALSI, MGLI…LGGV, VWSL…LLII, TPLG…AFSW, VSFV…FKFV, LFTA…LTWF, VITV…GFVS, VVLV…GLVA, TLVA…WAVI, FMHF…GFIV, and TFSG…LAVI.

This sequence belongs to the major facilitator superfamily. Phthalate permease family.

The protein resides in the cell membrane. The catalysed reaction is aldehydo-D-glucuronate(in) + H(+)(in) = aldehydo-D-glucuronate(out) + H(+)(out). The enzyme catalyses aldehydo-D-galacturonate(out) + H(+)(out) = aldehydo-D-galacturonate(in) + H(+)(in). Its function is as follows. Transport of aldohexuronates such as D-glucuronate and D-galacturonate. In Bacillus subtilis (strain 168), this protein is Hexuronate transporter.